Consider the following 504-residue polypeptide: MNIFFMFSLLFLATLGSCADDKNPLEECFREADYEEFLEIAKNGLKKTSNPKDIVVVGAGMSGLSAAYVLAGAGHKVTVLEASQLVGGRVRTHRNAKEGWYANLGPMRIPEKHRIVREYIRKFGLELNEFVQETDNGWYFVKNIRKRVGEVKKDPGLLKYPVKPSEAGKSAGQLYQEALGKAVEELKRTNCSYMLNKYDTYSTKEYLIKEGNLSTGAVDMIGDLMNEDSGYYVSFVESMKHDDIFAYEKRFDEIVGGMDQLPTSMYRAIEKSVLFKARVTKIQQNAEKVRVTYQTAAKTLSDVTADYVIVCTTSRAARRINFKPPLPPKKAHALRSVHYRSATKIFLTCTKKFWEDDGIQGGKSTTDLPSRFIYYPNHNFTSGVGVIIAYGIGDDSNFFLSLTLNECADIVFSDLSSIHQLPKNDIQKFCNPSVIQKWSLDRYAMGAITTFTPYQFQDYSKALTAPAGRVYFAGEYTANAHGWIDSTIKSGLTAARDVNQASEL.

An N-terminal signal peptide occupies residues 1–18 (MNIFFMFSLLFLATLGSC). Cysteines 28 and 191 form a disulfide. Residues 61–62 (MS), 81–82 (EA), R89, and 105–108 (GPMR) contribute to the FAD site. Residue R108 coordinates substrate. An N-linked (GlcNAc...) asparagine glycan is attached at N190. H241 contributes to the substrate binding site. V279 serves as a coordination point for FAD. A disulfide bond links C349 and C430. The N-linked (GlcNAc...) asparagine glycan is linked to N379. Position 390 (Y390) interacts with substrate. Residues E475 and 482-487 (GWIDST) each bind FAD. Residue 482–483 (GW) coordinates substrate.

This sequence belongs to the flavin monoamine oxidase family. FIG1 subfamily. Homodimer; non-covalently linked. Requires FAD as cofactor. In terms of tissue distribution, expressed by the venom gland.

It is found in the secreted. It carries out the reaction an L-alpha-amino acid + O2 + H2O = a 2-oxocarboxylate + H2O2 + NH4(+). Functionally, catalyzes an oxidative deamination of predominantly hydrophobic and aromatic L-amino acids, thus producing hydrogen peroxide that may contribute to the diverse toxic effects of this enzyme. Exhibits diverse biological activities, such as hemorrhage, hemolysis, edema, apoptosis of vascular endothelial cells or tumor cell lines, antibacterial and antiparasitic activities, as well as regulation of platelet aggregation. Its effect on platelets is controversial, since it either induces aggregation or inhibits agonist-induced aggregation. These different effects are probably due to different experimental conditions. This is L-amino-acid oxidase from Echis ocellatus (Ocellated saw-scaled viper).